The primary structure comprises 340 residues: UDP-3-O-acylglucosamine N-acyltransferase (340 aa).

H238 acts as the Proton acceptor in catalysis.

Belongs to the transferase hexapeptide repeat family. LpxD subfamily. In terms of assembly, homotrimer.

The enzyme catalyses a UDP-3-O-[(3R)-3-hydroxyacyl]-alpha-D-glucosamine + a (3R)-hydroxyacyl-[ACP] = a UDP-2-N,3-O-bis[(3R)-3-hydroxyacyl]-alpha-D-glucosamine + holo-[ACP] + H(+). It participates in bacterial outer membrane biogenesis; LPS lipid A biosynthesis. Its function is as follows. Catalyzes the N-acylation of UDP-3-O-acylglucosamine using 3-hydroxyacyl-ACP as the acyl donor. Is involved in the biosynthesis of lipid A, a phosphorylated glycolipid that anchors the lipopolysaccharide to the outer membrane of the cell. This is UDP-3-O-acylglucosamine N-acyltransferase from Psychromonas ingrahamii (strain DSM 17664 / CCUG 51855 / 37).